Here is a 308-residue protein sequence, read N- to C-terminus: Putative protein TIC 214 N-terminal part (308 aa).

6 consecutive transmembrane segments (helical) span residues 18–38 (IINSVVVVGFYYGFLTTFSIG), 64–84 (FITGQLMMFISIYYAPLHLAL), 87–107 (PHTITVLVLPHLLFHFFWNNH), 124–144 (LSIQCVFLNNLIFQLFNHFIL), 172–192 (VGWLIGHILFMKWVGLVLSWI), and 215–235 (IFSILLFITSVYYLGRMPSPI). Residues 239 to 249 (KLKETSEMEER) show a composition bias toward basic and acidic residues. Residues 239-308 (KLKETSEMEE…RDPSEWKGNI (70 aa)) are disordered. The segment covering 250–262 (GESEEETDVEIET) has biased composition (acidic residues). Over residues 264-273 (SETKETKQEQ) the composition is skewed to basic and acidic residues. The span at 275 to 293 (GSTEEDPSLCSEEQEDPDK) shows a compositional bias: acidic residues. Residues 294-308 (LDETGRDPSEWKGNI) are compositionally biased toward basic and acidic residues.

It belongs to the TIC214 family. As to quaternary structure, part of the Tic complex.

It localises to the plastid. The protein resides in the chloroplast inner membrane. Functionally, involved in protein precursor import into chloroplasts. May be part of an intermediate translocation complex acting as a protein-conducting channel at the inner envelope. The polypeptide is Putative protein TIC 214 N-terminal part (Piper cenocladum (Ant piper)).